A 407-amino-acid chain; its full sequence is uncharacterized protein (407 aa).

Coiled-coil stretches lie at residues Thr-96–Glu-130 and Met-287–Ser-345. Residues Glu-302–Lys-317 show a composition bias toward basic and acidic residues. Residues Glu-302–Asp-394 form a disordered region. A compositionally biased stretch (basic residues) spans Ile-318–Lys-331. Low complexity predominate over residues Thr-344–Ser-370.

This is an uncharacterized protein from Acanthamoeba polyphaga (Amoeba).